Reading from the N-terminus, the 293-residue chain is MRQPLICSGHSRPVSDLSFSNENSDGSFIVSACLDGSPMLRNGENGDWIGTFEGHKGAVWSSRFNSTASQALTASADYTVKLWDTLNGSEILSIEHQSIVKTADFSNNNSRVVTGGSEKILRIFDLERPNDPLLQISGHTNTIKTATWSVHNDDIVLSGGLDEVIRIWDLRSGTQVSLCAKSSITSMEFSKDRRFLVTTAGNEVTFWDAQSFYPLKVYSLPFDVNCASLHPDNSKFIAGGSDFWVHVYDFSTGNEIEVNKGHHGPVNCCRFSPDGASFASGSLDGTIRLWKGM.

7 WD repeats span residues 9–53 (GHSR…GTFE), 54–93 (GHKG…EILS), 95–134 (EHQS…DPLL), 138–178 (GHTN…QVSL), 180–217 (AKSS…PLKV), 219–258 (SLPF…EIEV), and 261–293 (GHHG…WKGM).

This sequence belongs to the WD repeat STRAP family. In terms of assembly, part of the core SMN complex.

In terms of biological role, the SMN complex catalyzes the assembly of small nuclear ribonucleoproteins (snRNPs), the building blocks of the spliceosome, and thereby plays an important role in the splicing of cellular pre-mRNAs. Most spliceosomal snRNPs contain a common set of Sm proteins SNRPB, SNRPD1, SNRPD2, SNRPD3, SNRPE, SNRPF and SNRPG that assemble in a heptameric protein ring on the Sm site of the small nuclear RNA to form the core snRNP (Sm core). In the cytosol, the Sm proteins SNRPD1, SNRPD2, SNRPE, SNRPF and SNRPG are trapped in an inactive 6S pICln-Sm complex by the chaperone CLNS1A that controls the assembly of the core snRNP. To assemble core snRNPs, the SMN complex accepts the trapped 5Sm proteins from CLNS1A forming an intermediate. Binding of snRNA inside 5Sm triggers eviction of the SMN complex, thereby allowing binding of SNRPD3 and SNRPB to complete assembly of the core snRNP. STRAP may play a role in the cellular distribution of the SMN complex. The sequence is that of Serine-threonine kinase receptor-associated protein (strap) from Dictyostelium discoideum (Social amoeba).